Consider the following 318-residue polypeptide: MVETQMDKLGFLLNHIGKQITTKVLSNAHITQTMKEIILENNSVNVDGGAAKNVSKGKSPPKEKKHWTEFESWEQLSKSKRSFKEYWTERNEIVNTLLLNWDNVRAAIKKFLNDDREWCGRINMINGVPEIVEIIPSPYKAGENIYFGSEAMIPAEIYSRVANKPAMFVFHTHPNLGSCCGGMPSICDISTTLRYLLMGWTAGHLIISSNQVGMLTVDKRIIIDLWANENPRWLMAQKILDIFMMLTSRRSLVNPWTLRDLKKILQDYGIEYIIFPSNDFFIYEDVRLLMISKKWTNFFTLHELLNDLETIETKTSST.

This sequence belongs to the asfivirus F317L family.

It is found in the virion. This is an uncharacterized protein from African swine fever virus (isolate Tick/Malawi/Lil 20-1/1983) (ASFV).